The chain runs to 70 residues: MRLLLSILGVLTLLSILPLARSFLANQECFSEYRHCRMKCKANEYAIRYCADWTICCRVKKREAKKKIMW.

Positions 1 to 22 are cleaved as a signal peptide; the sequence is MRLLLSILGVLTLLSILPLARS. Intrachain disulfides connect Cys29/Cys57 and Cys36/Cys50.

Belongs to the beta-defensin family.

The protein localises to the secreted. Its function is as follows. Has bactericidal activity. The chain is Beta-defensin 43 (Defb43) from Rattus norvegicus (Rat).